We begin with the raw amino-acid sequence, 241 residues long: Probable transcriptional regulatory protein LMOf2365_1554 (241 aa).

Positions 1-14 (MSGHSKWNNIQGRK) are enriched in polar residues. A disordered region spans residues 1 to 22 (MSGHSKWNNIQGRKNAQDSKRS).

This sequence belongs to the TACO1 family.

It is found in the cytoplasm. This Listeria monocytogenes serotype 4b (strain F2365) protein is Probable transcriptional regulatory protein LMOf2365_1554.